A 1079-amino-acid chain; its full sequence is Extracellular calcium-sensing receptor (1079 aa).

Positions 1 to 19 (MAWFGYCLALLALTWHSSA) are cleaved as a signal peptide. The Extracellular portion of the chain corresponds to 20 to 610 (YGPDQRAQKK…KEIEFLAWTE (591 aa)). The ligand-binding 1 (LB1) stretch occupies residues 22 to 188 (PDQRAQKKGD…QFKSFLRTIP (167 aa)). Cysteines 60 and 101 form a disulfide. 66-70 (RGFRW) contacts phosphate. I81, S84, L87, and L88 together coordinate Ca(2+). N90 carries an N-linked (GlcNAc...) asparagine glycan. Position 100 (T100) interacts with Ca(2+). A glycan (N-linked (GlcNAc...) asparagine) is linked at N130. T145 is a binding site for Ca(2+). L-tryptophan contacts are provided by S147, A168, and S170. Ca(2+) contacts are provided by S170, P188, D190, E231, and D234. A ligand-binding 2 (LB2) region spans residues 189–324 (NDEHQATAMA…GGTIGFGLKA (136 aa)). 7 cysteine pairs are disulfide-bonded: C236-C561, C358-C395, C437-C449, C542-C562, C546-C565, C568-C582, and C585-C598. The spermine site is built by D238 and S240. N-linked (GlcNAc...) asparagine glycans are attached at residues N261 and N287. E297 is a Ca(2+) binding site. E297 is a binding site for L-tryptophan. The N-linked (GlcNAc...) asparagine glycan is linked to N386. 415-417 (RIS) is a phosphate binding site. Residues N446, N468, and N488 are each glycosylated (N-linked (GlcNAc...) asparagine). Y489 contacts Ca(2+). N541 carries an N-linked (GlcNAc...) asparagine glycan. Positions 542 to 612 (CSRDCQAGTR…IEFLAWTEPF (71 aa)) are cysteine-rich (CR). G557 is a Ca(2+) binding site. N594 carries an N-linked (GlcNAc...) asparagine glycan. Residues 611-636 (PFGIALTLFAVLGIFLTAFVLGVFIK) form a helical membrane-spanning segment. At 637-648 (FRNTPIVKATNR) the chain is on the cytoplasmic side. An intracellular loop 1 (ICL1) region spans residues 637–648 (FRNTPIVKATNR). Residues 649-668 (ELSYLLLFSLLCCFSSSLFF) traverse the membrane as a helical segment. Residues 669-674 (IGEPQD) lie on the Extracellular side of the membrane. The helical transmembrane segment at 675–698 (WTCRLRQPAFGISFVLCISCILVK) threads the bilayer. The Cytoplasmic portion of the chain corresponds to 699 to 722 (TNRVLLVFEAKIPTSFHRKWWGLN). The tract at residues 699-722 (TNRVLLVFEAKIPTSFHRKWWGLN) is intracellular loop 2 (ICL2). Residues 723–745 (LQFLLVFLCTFMQIVICIIWLYT) form a helical membrane-spanning segment. At 746 to 769 (APPSSYRNHELEDEIIFITCHEGS) the chain is on the extracellular side. A helical membrane pass occupies residues 770–789 (LMALGSLIGYTCLLAAICFF). At 790–805 (FAFKSRKLPENFNEAK) the chain is on the cytoplasmic side. The interval 790-805 (FAFKSRKLPENFNEAK) is intracellular loop 3 (ICL3). The chain crosses the membrane as a helical span at residues 806–828 (FITFSMLIFFIVWISFIPAYAST). Over 829–832 (YGKF) the chain is Extracellular. The helical transmembrane segment at 833–854 (VSAVEVIAILAASFGLLACIFF) threads the bilayer. At 855–1079 (NKVYIILFKP…SSVTENILHS (225 aa)) the chain is on the cytoplasmic side. The interval 855–1079 (NKVYIILFKP…SSVTENILHS (225 aa)) is C-terminus. Residues 880 to 900 (AFKVAARATLRRPNISRKRSS) are interaction with RNF19A. Residue T888 is modified to Phosphothreonine. Residues 890–898 (RRPNISRKR) are arginine-rich retention motif. Residues 894-964 (ISRKRSSSLG…QQQPQQPRCK (71 aa)) are disordered. S899 carries the post-translational modification Phosphoserine. Low complexity predominate over residues 900–918 (SSLGGSTGSIPSSSISSKS). Basic and acidic residues predominate over residues 919 to 931 (NSEDRFPQPERQK). S920 carries the post-translational modification Phosphoserine. Over residues 932–961 (QQQPLALTQQEQQQQPLTLQPQQQQQPQQP) the composition is skewed to low complexity. The residue at position 1062 (S1062) is a Phosphoserine.

This sequence belongs to the G-protein coupled receptor 3 family. Homodimer; disulfide-linked. Interacts with VCP. Interacts with ARRB1. Phosphorylation at Thr-888 by PKC impairs coupling with G(q)/G(11) G-proteins, while it does not affect G(i)/G(o)-coupling. Phosphorylation at Ser-899 by PKA promote plasma membrane localization. In terms of processing, ubiquitinated by RNF19A; which induces proteasomal degradation. Epidermis, kidney and cartilage.

Its subcellular location is the cell membrane. Its activity is regulated as follows. In resting state, adopts an open conformation, anion-binding promoting the inactive configuration. Upon aromatic amino acid-binding, the groove in the extracellular venus flytrap module is closed, thereby inducing the formation of a novel homodimer interface between subunits. Calcium ions stabilize the active state by enhancing homodimer interactions between membrane-proximal domains to fully activate the receptor. Upon activation, the homodimer adopts an asymmetric configuration of the 7-transmembrane region that primes one protomer for G-protein coupling. G-protein binding expands the transmembrane dimer interface; the restriction imposed by the receptor dimer, in combination with intracellular loop 2 (ICL2), enables G-protein activation by facilitating conformational transition of G-protein alpha. Coupling to different classes of G-proteins results in distinct CASR-G-protein interfaces. G-protein-coupled receptor that senses changes in the extracellular concentration of calcium ions and plays a key role in maintaining calcium homeostasis. Senses fluctuations in the circulating calcium concentration: activated by elevated circulating calcium, leading to decreased parathyroid hormone (PTH) secretion in parathyroid glands. In kidneys, acts as a key regulator of renal tubular calcium resorption. Ligand binding causes a conformation change that triggers signaling via guanine nucleotide-binding proteins (G-proteins) and modulates the activity of downstream effectors. CASR is coupled with different G(q)/G(11), G(i)/G(o)- or G(s)-classes of G-proteins depending on the context. In the parathyroid and kidney, CASR signals through G(q)/G(11) and G(i)/G(o) G-proteins: G(q)/G(11) coupling activates phospholipase C-beta, releasing diacylglycerol (DAG) and inositol 1,4,5-trisphosphate (IP3) second messengers, while G(i)/G(o) coupling mediates inhibition of adenylate cyclase activity. The G-protein-coupled receptor activity is activated by a co-agonist mechanism: aromatic amino acids, such as Trp or Phe, act concertedly with divalent cations, such as calcium or magnesium, to achieve full receptor activation. Acts as an activator of the NLRP3 inflammasome via G(i)/G(o)-mediated signaling: down-regulation of cyclic AMP (cAMP) relieving NLRP3 inhibition by cAMP. Acts as a regulator of proton-sensing receptor GPR68 in a seesaw manner: CASR-mediated signaling inhibits GPR68 signaling in response to extracellular calcium, while GPR68 inhibits CASR in presence of extracellular protons. The chain is Extracellular calcium-sensing receptor from Mus musculus (Mouse).